The following is a 223-amino-acid chain: Probable GTP-binding protein EngB (223 aa).

Residues 25–199 (TGVEIAFAGR…SRLLQDWFDE (175 aa)) form the EngB-type G domain. GTP is bound by residues 33-40 (GRSNAGKS), 60-64 (GRTQH), 78-81 (DLPG), 145-148 (TKAD), and 178-180 (FSS). Residues Ser40 and Thr62 each coordinate Mg(2+).

Belongs to the TRAFAC class TrmE-Era-EngA-EngB-Septin-like GTPase superfamily. EngB GTPase family. Mg(2+) is required as a cofactor.

Functionally, necessary for normal cell division and for the maintenance of normal septation. This Nitrosomonas eutropha (strain DSM 101675 / C91 / Nm57) protein is Probable GTP-binding protein EngB.